The primary structure comprises 281 residues: Pantothenate synthetase (281 aa).

Position 30 to 37 (Met30 to His37) interacts with ATP. His37 functions as the Proton donor in the catalytic mechanism. A (R)-pantoate-binding site is contributed by Gln61. A beta-alanine-binding site is contributed by Gln61. An ATP-binding site is contributed by Gly147–Asp150. Gln153 contributes to the (R)-pantoate binding site. ATP contacts are provided by residues Ile176 and Lys184–Arg187.

This sequence belongs to the pantothenate synthetase family. In terms of assembly, homodimer.

It localises to the cytoplasm. It catalyses the reaction (R)-pantoate + beta-alanine + ATP = (R)-pantothenate + AMP + diphosphate + H(+). The protein operates within cofactor biosynthesis; (R)-pantothenate biosynthesis; (R)-pantothenate from (R)-pantoate and beta-alanine: step 1/1. Catalyzes the condensation of pantoate with beta-alanine in an ATP-dependent reaction via a pantoyl-adenylate intermediate. In Clostridium botulinum (strain 657 / Type Ba4), this protein is Pantothenate synthetase.